Consider the following 1241-residue polypeptide: uncharacterized protein (1241 aa).

The stretch at 21–49 (ILNDNVREINIAKKEIKQLREYVGILQQN) forms a coiled coil. 3 consecutive transmembrane segments (helical) span residues 261–281 (VNAI…FVLG), 918–938 (AVVG…GLVA), and 947–967 (GHIV…VIGG). Positions 1005–1028 (THIGKEDSNNGVSTSTNKRSIGKA) are disordered. The segment covering 1013–1028 (NNGVSTSTNKRSIGKA) has biased composition (polar residues).

The protein localises to the host membrane. This is an uncharacterized protein from Diadromus pulchellus (Parasitic wasp).